A 214-amino-acid chain; its full sequence is Leucyl/phenylalanyl-tRNA--protein transferase (214 aa).

It belongs to the L/F-transferase family.

It is found in the cytoplasm. The catalysed reaction is N-terminal L-lysyl-[protein] + L-leucyl-tRNA(Leu) = N-terminal L-leucyl-L-lysyl-[protein] + tRNA(Leu) + H(+). The enzyme catalyses N-terminal L-arginyl-[protein] + L-leucyl-tRNA(Leu) = N-terminal L-leucyl-L-arginyl-[protein] + tRNA(Leu) + H(+). It carries out the reaction L-phenylalanyl-tRNA(Phe) + an N-terminal L-alpha-aminoacyl-[protein] = an N-terminal L-phenylalanyl-L-alpha-aminoacyl-[protein] + tRNA(Phe). In terms of biological role, functions in the N-end rule pathway of protein degradation where it conjugates Leu, Phe and, less efficiently, Met from aminoacyl-tRNAs to the N-termini of proteins containing an N-terminal arginine or lysine. The polypeptide is Leucyl/phenylalanyl-tRNA--protein transferase (Cereibacter sphaeroides (strain ATCC 17023 / DSM 158 / JCM 6121 / CCUG 31486 / LMG 2827 / NBRC 12203 / NCIMB 8253 / ATH 2.4.1.) (Rhodobacter sphaeroides)).